Reading from the N-terminus, the 1693-residue chain is Latrophilin Cirl (1693 aa).

Residues 1–774 (MVLQGAKQRL…LFTMFDGNMR (774 aa)) are Extracellular-facing. The SUEL-type lectin domain occupies 30–119 (ACEGKKLTIE…KYLEAHYQCV (90 aa)). N-linked (GlcNAc...) asparagine glycans are attached at residues Asn147, Asn260, Asn306, and Asn345. Residues 190 to 309 (PPATHATPPG…GPSVSSNGSA (120 aa)) are disordered. 2 stretches are compositionally biased toward polar residues: residues 259-269 (SNATAPSNTRI) and 287-309 (KSSP…NGSA). Positions 379-406 (SFDEDDEEMAGTSTTTPMSTSGDCLHNS) are disordered. Low complexity predominate over residues 390–399 (TSTTTPMSTS). 4 N-linked (GlcNAc...) asparagine glycosylation sites follow: Asn405, Asn662, Asn710, and Asn737. The 194-residue stretch at 568–761 (RSVVQKVKNI…AILMDVVDEH (194 aa)) folds into the GAIN-B domain. Disulfide bonds link Cys716–Cys743 and Cys731–Cys745. A GPS region spans residues 716–761 (CVFWNYIDHAWSANGCSLESTNRTHSVCSCNHLTNFAILMDVVDEH). A helical transmembrane segment spans residues 775–795 (IFIYISIAICVVFIVIALLTL). Topologically, residues 796-808 (KLFNGVFVKSART) are cytoplasmic. A helical transmembrane segment spans residues 809 to 829 (SIYINIYICLLAIELLFLLGI). At 830-835 (EQTETS) the chain is on the extracellular side. A helical transmembrane segment spans residues 836–856 (IFCGFITVFLHCAILSGTSWF). The Cytoplasmic portion of the chain corresponds to 857 to 882 (CYEAFHSYSTLTSDELLLEVDQTPKV). The chain crosses the membrane as a helical span at residues 883 to 903 (NCYYLLSYGLSLSVVAISLVI). Residues 904 to 927 (NPSTYTQNDYCVLMEANAVFYATF) are Extracellular-facing. A helical transmembrane segment spans residues 928-948 (VAPVLIFFMAAIGYTFLSWII). Topologically, residues 949 to 975 (MCRKSRTGLKTKEHTRLATVRFDIRCS) are cytoplasmic. The chain crosses the membrane as a helical span at residues 976–996 (FVFFLLLSAVWCSAYFYLRGA). The Extracellular portion of the chain corresponds to 997–1003 (KMDEDVT). A helical transmembrane segment spans residues 1004–1024 (GIYGYNFICFNTLLGLYIFVF). The Cytoplasmic segment spans residues 1025-1693 (HCIQNEKIRR…VRCYLEPLAK (669 aa)). The tract at residues 1089 to 1109 (PLGTNDDAHDEQQQQQHMSAT) is disordered. Ser1165, Ser1256, and Ser1263 each carry phosphoserine. Disordered stretches follow at residues 1237 to 1264 (KPNS…LHSR), 1279 to 1362 (KTKP…APPP), 1450 to 1529 (SRYG…LPPQ), and 1596 to 1678 (SMRG…SAML). Positions 1307 to 1323 (QQQQQLRQQRQQQQQQL) are enriched in low complexity. 2 positions are modified to phosphoserine: Ser1324 and Ser1325. Low complexity predominate over residues 1337–1357 (LHLQHQQQQQQQRRAGGQQQL). Residues 1464–1475 (RNQQQQQHSLAQ) show a composition bias toward polar residues. Acidic residues-rich tracts occupy residues 1485–1498 (DEDD…EETT) and 1508–1521 (CDEE…DMED). The span at 1640 to 1663 (QQLQKLSPQSTTSSSSHTSHSNPH) shows a compositional bias: low complexity.

This sequence belongs to the G-protein coupled receptor 2 family. LN-TM7 subfamily. As to quaternary structure, forms a heterodimer, consisting of a large extracellular region non-covalently linked to a seven-transmembrane moiety. Post-translationally, proteolytically cleaved into 2 subunits, an extracellular subunit and a seven-transmembrane subunit.

The protein resides in the cell membrane. This chain is Latrophilin Cirl, found in Drosophila pseudoobscura pseudoobscura (Fruit fly).